Here is a 622-residue protein sequence, read N- to C-terminus: Chaperone protein HscA homolog (622 aa).

It belongs to the heat shock protein 70 family.

Functionally, chaperone involved in the maturation of iron-sulfur cluster-containing proteins. Has a low intrinsic ATPase activity which is markedly stimulated by HscB. This is Chaperone protein HscA homolog from Methylobacillus flagellatus (strain ATCC 51484 / DSM 6875 / VKM B-1610 / KT).